Consider the following 131-residue polypeptide: MNIIQQLEQEEIAKLNKTIPDFEPGDTVIVNVKVKEGERTRVQAYEGVCIGRSGSGLNENFTVRKISYGEGVERVFPIYSPMIDSIKVTRRGKVRRAKLYYLRDRRGKSARIAERAERGSDKGKAAPAAAE.

Residues 107 to 131 are disordered; the sequence is GKSARIAERAERGSDKGKAAPAAAE. Residues 111-124 show a composition bias toward basic and acidic residues; sequence RIAERAERGSDKGK.

The protein belongs to the bacterial ribosomal protein bL19 family.

This protein is located at the 30S-50S ribosomal subunit interface and may play a role in the structure and function of the aminoacyl-tRNA binding site. The polypeptide is Large ribosomal subunit protein bL19 (Methylobacterium sp. (strain 4-46)).